The chain runs to 91 residues: Small ubiquitin-related modifier (91 aa).

The Ubiquitin-like domain occupies glutamate 13 to phenylalanine 91. Glycine 90 participates in a covalent cross-link: Glycyl lysine isopeptide (Gly-Lys) (interchain with K-? in acceptor proteins). A propeptide is located at residue phenylalanine 91.

It belongs to the ubiquitin family. SUMO subfamily. In terms of assembly, covalently attached to tbx-2. Covalently attached to lin-1. Covalently attached to lin-11. Covalently attached to sop-2. Covalently attached to bet-1. Post-translationally, cleavage of precursor form by ulp-1 is necessary for function.

It localises to the cytoplasm. The protein localises to the nucleus. The protein resides in the cytoskeleton. It is found in the spindle. Its subcellular location is the chromosome. It localises to the microtubule organizing center. The protein localises to the centrosome. Its function is as follows. Ubiquitin-like protein which can be covalently attached to target lysines as a monomer. Does not seem to be involved in protein degradation and may function as an antagonist of ubiquitin in the degradation process. Plays a role in a number of cellular processes such as nuclear transport, DNA replication and repair, mitosis and signal transduction. Covalent attachment to its substrates requires prior activation by the E1 complex aos-1-uba-2 and linkage to the E2 enzyme ubc-9, and can be promoted by an E3 ligase such as gei-17. Required for embryonic development, fertility, vulval morphogenesis and inhibition of vulval cell fates. Probably by sumoylating bet-1, prevents muscle myosin depletion in aging adults probably by preventing myoblast growth factor receptor egl-15 overexpression. Plays a role in the attenuation of the let-60/ras pathway. Plays a role in male tail tip morphogenesis. Plays a role in the mitochondrial stress response with its covalent attachment to transcription factors dve-1 and afts-1 negatively regulating the mitochondrial unfolded protein response. The protein is Small ubiquitin-related modifier of Caenorhabditis elegans.